The sequence spans 265 residues: AT-hook motif nuclear-localized protein 18 (265 aa).

The segment at 1-75 (MDEVSRSHTP…AGSKNKPKAP (75 aa)) is disordered. Positions 19–30 (HYHHQNAGRQKR) are enriched in basic residues. Residues 59 to 71 (RRPRGRPAGSKNK) constitute a DNA-binding region (a.T hook). The PPC domain occupies 83–217 (ANAFRCHVME…EEEETEREID (135 aa)).

It is found in the nucleus. Its function is as follows. Transcription factor that specifically binds AT-rich DNA sequences related to the nuclear matrix attachment regions (MARs). Acts redundantly with AHL22, AHL27 and AHL29 in the regulation of flowering and regulation of the hypocotyl elongation. This chain is AT-hook motif nuclear-localized protein 18, found in Arabidopsis thaliana (Mouse-ear cress).